A 562-amino-acid polypeptide reads, in one-letter code: Arginine--tRNA ligase (562 aa).

Positions 129-139 (ANPTGPLHVGH) match the 'HIGH' region motif.

This sequence belongs to the class-I aminoacyl-tRNA synthetase family. As to quaternary structure, monomer.

It localises to the cytoplasm. It carries out the reaction tRNA(Arg) + L-arginine + ATP = L-arginyl-tRNA(Arg) + AMP + diphosphate. This chain is Arginine--tRNA ligase, found in Stenotrophomonas maltophilia (strain K279a).